The primary structure comprises 453 residues: Tol-Pal system protein TolB (453 aa).

A signal peptide spans 1–31 (MINNLSVSMTKVLKIILTIIIILFNTLSILA).

It belongs to the TolB family. As to quaternary structure, the Tol-Pal system is composed of five core proteins: the inner membrane proteins TolA, TolQ and TolR, the periplasmic protein TolB and the outer membrane protein Pal. They form a network linking the inner and outer membranes and the peptidoglycan layer.

Its subcellular location is the periplasm. Part of the Tol-Pal system, which plays a role in outer membrane invagination during cell division and is important for maintaining outer membrane integrity. This chain is Tol-Pal system protein TolB, found in Orientia tsutsugamushi (strain Boryong) (Rickettsia tsutsugamushi).